Here is a 481-residue protein sequence, read N- to C-terminus: Glutamate--tRNA ligase (481 aa).

The 'HIGH' region motif lies at 9–19; that stretch reads PSPTGNLHIGT. The short motif at 249 to 253 is the 'KMSKS' region element; sequence KLSKR. Lys252 is an ATP binding site.

It belongs to the class-I aminoacyl-tRNA synthetase family. Glutamate--tRNA ligase type 1 subfamily. As to quaternary structure, monomer.

Its subcellular location is the cytoplasm. The catalysed reaction is tRNA(Glu) + L-glutamate + ATP = L-glutamyl-tRNA(Glu) + AMP + diphosphate. In terms of biological role, catalyzes the attachment of glutamate to tRNA(Glu) in a two-step reaction: glutamate is first activated by ATP to form Glu-AMP and then transferred to the acceptor end of tRNA(Glu). The polypeptide is Glutamate--tRNA ligase (Picosynechococcus sp. (strain ATCC 27264 / PCC 7002 / PR-6) (Agmenellum quadruplicatum)).